We begin with the raw amino-acid sequence, 63 residues long: Large ribosomal subunit protein uL29 (63 aa).

It belongs to the universal ribosomal protein uL29 family.

The protein is Large ribosomal subunit protein uL29 of Aliivibrio fischeri (strain ATCC 700601 / ES114) (Vibrio fischeri).